The primary structure comprises 477 residues: MNKDQQLAHHILDAVGGIDNVDNIIHCMTRVRLKINNETQVDYPKLKNIEGVLGVIQDERLQIVVGPGTVNEVSAEMVKLSGVQLGEDIPHRSNTSNIKNQAQQNKREFQQKRKQSKMNTILKSIANIFIPLIPAFIGAGLIGGIAAVLNNFITAGTISADWVKQLVAVLNVIKDGMLAYLAIFTGFNAAKVFGATPGLGGVIGGTTLLTGITEDNPIKNVFTGEPLIAGQGGIIGVILAVWLLSIIEKKLHKIVPNAIDIIVTPTISLLIIGLLTIFFFMPIAGFISDGLVGVVNWVIGVGGIFSGFIIGAFFLPLVMLGLHHIFTPIHIELINQSGATYLLPIAAMAGAGQVGAALALWVRCKNNTTLRTAIKGALPVGFLGIGEPLIYGVTLPLGRPFITACLGGGIGGAVIGGIGHIGATAIGPSGISLLPLIAHQKYLGYIIGLLSAYLAGFIFTYFFGTTKEMRNLNKLGD.

The 83-residue stretch at 5-87 (QQLAHHILDA…VKLSGVQLGE (83 aa)) folds into the PTS EIIB type-1 domain. Catalysis depends on Cys27, which acts as the Phosphocysteine intermediate; for EIIB activity. The disordered stretch occupies residues 91–113 (HRSNTSNIKNQAQQNKREFQQKR). Over residues 92–104 (RSNTSNIKNQAQQ) the composition is skewed to polar residues. Residues 123 to 477 (KSIANIFIPL…EMRNLNKLGD (355 aa)) enclose the PTS EIIC type-1 domain. 10 helical membrane passes run 128-148 (IFIPLIPAFIGAGLIGGIAAV), 167-187 (VAVLNVIKDGMLAYLAIFTGF), 192-212 (VFGATPGLGGVIGGTTLLTGI), 227-247 (LIAGQGGIIGVILAVWLLSII), 267-287 (ISLLIIGLLTIFFFMPIAGFI), 298-318 (VIGVGGIFSGFIIGAFFLPLV), 342-362 (LLPIAAMAGAGQVGAALALWV), 377-397 (ALPVGFLGIGEPLIYGVTLPL), 401-421 (FITACLGGGIGGAVIGGIGHI), and 443-463 (LGYIIGLLSAYLAGFIFTYFF).

The protein localises to the cell membrane. The enzyme catalyses N-acetyl-beta-D-muramate-(1-&gt;4)-N-acetyl-D-glucosamine(out) + N(pros)-phospho-L-histidyl-[protein] = 6-phospho-N-acetyl-beta-D-muramate-(1-&gt;4)-N-acetyl-D-glucosamine(in) + L-histidyl-[protein]. The protein operates within cell wall biogenesis; peptidoglycan recycling. The phosphoenolpyruvate-dependent sugar phosphotransferase system (sugar PTS), a major carbohydrate active transport system, catalyzes the phosphorylation of incoming sugar substrates concomitantly with their translocation across the cell membrane. This system is involved in the uptake and phosphorylation of MurNAc-GlcNAc, the principle peptidoglycan turnover product of S.aureus, yielding cytoplasmic MurNAc 6P-GlcNAc. The chain is PTS system MurNAc-GlcNAc-specific EIIBC component from Staphylococcus haemolyticus (strain JCSC1435).